Reading from the N-terminus, the 118-residue chain is uncharacterized protein (118 aa).

Residues 1–49 are disordered; sequence MDYVGGSLKLKNVKKKPLKKKKKDSKKLAEKVQEHSSRDKSPLEENGVS. The segment covering 11–25 has biased composition (basic residues); that stretch reads KNVKKKPLKKKKKDS. Basic and acidic residues predominate over residues 26 to 43; that stretch reads KKLAEKVQEHSSRDKSPL.

This is an uncharacterized protein from Schizosaccharomyces pombe (strain 972 / ATCC 24843) (Fission yeast).